Consider the following 124-residue polypeptide: Probable glycine cleavage system H protein (124 aa).

Residues 22 to 104 (TGRVGISEFA…FGDGWLVEID (83 aa)) form the Lipoyl-binding domain. Residue lysine 63 is modified to N6-lipoyllysine.

It belongs to the GcvH family. In terms of assembly, the glycine cleavage system is composed of four proteins: P, T, L and H. The cofactor is (R)-lipoate.

Its function is as follows. The glycine cleavage system catalyzes the degradation of glycine. The H protein shuttles the methylamine group of glycine from the P protein to the T protein. This is Probable glycine cleavage system H protein from Halobacterium salinarum (strain ATCC 700922 / JCM 11081 / NRC-1) (Halobacterium halobium).